Consider the following 71-residue polypeptide: Potassium voltage-gated channel subfamily E member 2 (71 aa).

Residues Val-7–Val-27 form a helical membrane-spanning segment. Residues Ser-28–Asn-71 are Cytoplasmic-facing.

This sequence belongs to the potassium channel KCNE family. Interacts with KCNB1. Associates with KCNH2/ERG1. May associate with KCNQ2 and KCNQ3. Associates with HCN1 and probably HCN2. Heteromultimer with KCNC2. Interacts with KCNC2. Interacts with KCNQ1; forms a heterooligomer complex that targets to the membrane raft and leading to currents with an apparently instantaneous activation, a rapid deactivation process and a linear current-voltage relationship and decreases the amplitude of the outward current. In terms of tissue distribution, detected in heart; expression is highest in the SA node and the right atrium, and barely detectable in the ventricle.

The protein localises to the cell membrane. The protein resides in the apical cell membrane. Functionally, ancillary protein that functions as a regulatory subunit of the voltage-gated potassium (Kv) channel complex composed of pore-forming and potassium-conducting alpha subunits and of regulatory beta subunits. KCNE2 beta subunit modulates the gating kinetics and enhances stability of the channel complex. Alters the gating of the delayed rectifier Kv channel containing KCNB1 alpha subunit. Associates with KCNH2/HERG alpha subunit Kv channel to form the rapidly activating component of the delayed rectifying potassium current (IKr) in heart. May associate with KCNQ2 and/or KCNQ3 alpha subunits to modulate the native M-type current. May associate with HCN1 and HCN2 channel subunits to increase potassium current. Forms a heterooligomer complex with KCNQ1/KVLQT1 alpha subunits which leads to currents with an apparently instantaneous activation, a rapid deactivation process and a linear current-voltage relationship and decreases the amplitude of the outward current. KCNQ1-KCNE2 channel associates with Na(+)-coupled myo-inositol symporter in the apical membrane of choroid plexus epithelium and regulates the myo-inositol gradient between blood and cerebrospinal fluid with an impact on neuron excitability. The protein is Potassium voltage-gated channel subfamily E member 2 (KCNE2) of Oryctolagus cuniculus (Rabbit).